Reading from the N-terminus, the 182-residue chain is UPF0397 protein BCG9842_B2659 (182 aa).

A run of 5 helical transmembrane segments spans residues 9 to 29, 40 to 60, 71 to 91, 114 to 134, and 142 to 162; these read VVAI…GFSI, AILT…IGLI, WGIW…MGLI, ITGL…DIIV, and IVIQ…VLGL.

It belongs to the UPF0397 family.

Its subcellular location is the cell membrane. The polypeptide is UPF0397 protein BCG9842_B2659 (Bacillus cereus (strain G9842)).